The following is a 186-amino-acid chain: Protein C (186 aa).

A compositionally biased stretch (polar residues) spans 1 to 12; it reads MSKTDWNASGPS. Residues 1 to 43 form a disordered region; it reads MSKTDWNASGPSRPSPSAHWPSGKLWQHGQKYQTTQDRSRPPA.

The protein belongs to the morbillivirus protein C family. Interacts with the phosphoprotein (via C-terminus); this interaction allows C to associate with the ribonucleocapsid.

It is found in the host nucleus. The protein resides in the host cytoplasmic vesicle. In terms of biological role, ribonucleocapsid-associated protein that interacts with the phosphoprotein (P), thereby increasing replication accuracy and processivity of the polymerase complex. In Homo sapiens (Human), this protein is Protein C (P/V/C).